We begin with the raw amino-acid sequence, 487 residues long: G-patch domain and KOW motifs-containing protein (487 aa).

Disordered stretches follow at residues 65-121, 181-232, and 295-367; these read HKNR…PLLM, VKPL…TGSA, and KVHQ…RPEP. Residues 88–116 are a coiled coil; that stretch reads AVLSQAVKELIEESRRAQEDNSETNQTLS. 2 stretches are compositionally biased toward basic and acidic residues: residues 96–106 and 200–209; these read ELIEESRRAQE and SALKHLEPQK. One can recognise a G-patch domain in the interval 154–200; sequence VQQYGMAMLRGMGWKEGEGIGRTFKQDVKPLEQKLRPKGLGLGADRS. Residues 226–253 form the KOW 1 domain; it reads GLGTGSAVQIQSGAYKDMYGKVEGIDPD. Composition is skewed to basic and acidic residues over residues 295–333 and 352–367; these read KVHQ…DVKL and RSPE…RPEP. In terms of domain architecture, KOW 2 spans 428–455; sequence PKEEGEHVMVVLGKYRGMVGKILHRDKQ.

This sequence belongs to the MOS2 family. Component of the minor spliceosome, which splices U12-type introns.

It localises to the nucleus. Its function is as follows. RNA-binding protein involved in pre-mRNA splicing. The protein is G-patch domain and KOW motifs-containing protein (gpkow) of Xenopus laevis (African clawed frog).